Here is a 316-residue protein sequence, read N- to C-terminus: Probable 5-dehydro-4-deoxyglucarate dehydratase (316 aa).

Belongs to the DapA family.

It catalyses the reaction 5-dehydro-4-deoxy-D-glucarate + H(+) = 2,5-dioxopentanoate + CO2 + H2O. It functions in the pathway carbohydrate acid metabolism; D-glucarate degradation; 2,5-dioxopentanoate from D-glucarate: step 2/2. The protein is Probable 5-dehydro-4-deoxyglucarate dehydratase of Corynebacterium glutamicum (strain ATCC 13032 / DSM 20300 / JCM 1318 / BCRC 11384 / CCUG 27702 / LMG 3730 / NBRC 12168 / NCIMB 10025 / NRRL B-2784 / 534).